A 1158-amino-acid chain; its full sequence is Transient receptor potential cation channel subfamily M member 5 (1158 aa).

Topologically, residues Met1–Ala729 are cytoplasmic. Residue Ser129 is modified to Phosphoserine; by PKC. The Ca(2+) site is built by Cys341, Asp350, Asp353, and Glu354. The segment at Gly488–Pro507 is disordered. The stretch at Lys552–Glu572 forms a coiled coil. A helical membrane pass occupies residues Pro730–Val754. The Extracellular portion of the chain corresponds to Asp755–Ser764. The helical transmembrane segment at Gly765 to Gln784 threads the bilayer. Glu781 and Gln784 together coordinate Ca(2+). At Gly785–Asn805 the chain is on the cytoplasmic side. A helical transmembrane segment spans residues Trp806 to Arg824. Ca(2+)-binding residues include Asn807 and Asp810. Over Met825–Glu831 the chain is Extracellular. Residues Ala832 to Ile854 form a helical membrane-spanning segment. Over His855–Ile863 the chain is Cytoplasmic. A helical membrane pass occupies residues Ile864–Leu893. Topologically, residues Leu894–Glu902 are extracellular. Residues Trp903–Leu938 constitute an intramembrane region (pore-forming). The Selectivity filter motif lies at Phe917–Gln919. Residues Leu939–Ala950 lie on the Extracellular side of the membrane. The helical transmembrane segment at Asn951 to Gln985 threads the bilayer. The Cytoplasmic portion of the chain corresponds to Gly986–Thr1158. Glu1002 provides a ligand contact to Ca(2+). The span at Thr1127–Ala1141 shows a compositional bias: polar residues. Residues Thr1127–Thr1158 form a disordered region.

It belongs to the transient receptor (TC 1.A.4) family. LTrpC subfamily. TRPM5 sub-subfamily. In terms of assembly, homotetramer. Post-translationally, multiple phosphorylation sites regulate the Gq/ TRPM5 modulation axis, with the Ser-129 playing a substantial role in this positive modulation. As to expression, strongly expressed in liver, heart, testis, brain and kidney. Detected in fetal liver, kidney, spleen, brain, heart and lung, and in adult skin, eyes, spleen, stomach, small intestine, colon, lung, bladder, pancreas and thymus. Biallelically expressed at all stages and tissues examined. Also expressed in subsets of taste receptor cells of the tongue, in olfactory sensory neurons of the main olfactory epithelium and in the vomeronasal organ.

It localises to the cell membrane. The catalysed reaction is Na(+)(in) = Na(+)(out). The enzyme catalyses K(+)(in) = K(+)(out). With respect to regulation, ca(2+)-activated cation channel. Displays voltage dependence modulation. Regulated by PI(4,5)P2 levels. PI(4,5)P 2 reverses the Ca(2+) -induced desensitization of channels. Inhibited by flufenamic acid with an IC(50) of 24.5 uM and spermine with an IC(50) of 37 uM. Is a highly temperature-sensitive, heat activated channel showing a steep increase of inward currents at temperatures between 15 and 35 degrees Celsius. Heat activation is due to a shift of the voltage-dependent activation curve to negative potentials. The channel is blocked by extracellular acidification. In terms of biological role, monovalent cation-selective ion channel activated by intracellular Ca(2+) in a voltage- and temperature-dependent manner. Mediates the transport of Na(+), K(+) and Cs(+) ions equally well. Activated directly by increase in intracellular Ca(2+), but is impermeable to it. The activation mechanism of TRPM5 involves a multistep process. TRPM5 activation involves ligand binding (i.e., tastant molecule, glucose stimulation) to Gq/G-protein coupled receptors (GPCR) and leads to the breakdown of phosphatidylinositol bisphosphate (PIP2) into diacylglycerol (DAG) and inositol trisphosphate (IP3), IP3 binds to its receptors in the endoplasmic reticulum and cause Ca(2+) release. Simultaneously with the intracellular Ca(2+) release, DAG activates the protein kinase C (PKC), which phosphorylates the TRPM5 channel. This phosphorylation combined with the bound Ca(2+), leads to a robust inward current allowing the entry of sodium ions (Na+) into the cell. This ion influx depolarizes the cell membrane, generating action potentials that propagate TRPM5 signals. Is a key player in sensing sweet, umami and bitter stimuli. May also be involved in sensing semiochemicals. Involved in insulin secretion by pancreatic beta cells. The polypeptide is Transient receptor potential cation channel subfamily M member 5 (Mus musculus (Mouse)).